Reading from the N-terminus, the 200-residue chain is Ribonuclease HII (200 aa).

Positions glutamine 11–glycine 200 constitute an RNase H type-2 domain. A divalent metal cation contacts are provided by aspartate 17, glutamate 18, and aspartate 109.

This sequence belongs to the RNase HII family. The cofactor is Mn(2+). It depends on Mg(2+) as a cofactor.

It is found in the cytoplasm. The catalysed reaction is Endonucleolytic cleavage to 5'-phosphomonoester.. Endonuclease that specifically degrades the RNA of RNA-DNA hybrids. The polypeptide is Ribonuclease HII (Hamiltonella defensa subsp. Acyrthosiphon pisum (strain 5AT)).